A 189-amino-acid polypeptide reads, in one-letter code: Adenylate kinase homolog MTH_1663 (189 aa).

Residue 12-20 (GVPGTGKTT) coordinates ATP.

The protein belongs to the archaeal adenylate kinase family.

This chain is Adenylate kinase homolog MTH_1663, found in Methanothermobacter thermautotrophicus (strain ATCC 29096 / DSM 1053 / JCM 10044 / NBRC 100330 / Delta H) (Methanobacterium thermoautotrophicum).